The following is a 290-amino-acid chain: 33 kDa chaperonin (290 aa).

2 disulfides stabilise this stretch: cysteine 235–cysteine 237 and cysteine 268–cysteine 271.

The protein belongs to the HSP33 family. Post-translationally, under oxidizing conditions two disulfide bonds are formed involving the reactive cysteines. Under reducing conditions zinc is bound to the reactive cysteines and the protein is inactive.

The protein localises to the cytoplasm. Redox regulated molecular chaperone. Protects both thermally unfolding and oxidatively damaged proteins from irreversible aggregation. Plays an important role in the bacterial defense system toward oxidative stress. The protein is 33 kDa chaperonin of Streptococcus pneumoniae (strain CGSP14).